The primary structure comprises 375 residues: Histidine biosynthesis bifunctional protein HisB (375 aa).

The segment at 1–168 is histidinol-phosphatase; the sequence is MTPILFVDRD…GIAHELADAP (168 aa). Catalysis depends on Asp-8, which acts as the Nucleophile. Asp-8, Asp-10, and Asp-128 together coordinate Mg(2+). Asp-10 serves as the catalytic Proton donor. The tract at residues 169-375 is imidazoleglycerol-phosphate dehydratase; that stretch reads RRAVVQRNTK…SALPTTKGAL (207 aa).

This sequence in the N-terminal section; belongs to the histidinol-phosphatase family. In the C-terminal section; belongs to the imidazoleglycerol-phosphate dehydratase family. Requires Mg(2+) as cofactor.

It localises to the cytoplasm. The catalysed reaction is D-erythro-1-(imidazol-4-yl)glycerol 3-phosphate = 3-(imidazol-4-yl)-2-oxopropyl phosphate + H2O. The enzyme catalyses L-histidinol phosphate + H2O = L-histidinol + phosphate. It participates in amino-acid biosynthesis; L-histidine biosynthesis; L-histidine from 5-phospho-alpha-D-ribose 1-diphosphate: step 6/9. The protein operates within amino-acid biosynthesis; L-histidine biosynthesis; L-histidine from 5-phospho-alpha-D-ribose 1-diphosphate: step 8/9. The protein is Histidine biosynthesis bifunctional protein HisB of Xanthomonas oryzae pv. oryzae (strain MAFF 311018).